A 213-amino-acid chain; its full sequence is Proteasome subunit beta (213 aa).

The propeptide at 1-11 (MSMIEEKIYKG) is removed in mature form; by autocatalysis. Catalysis depends on threonine 12, which acts as the Nucleophile.

This sequence belongs to the peptidase T1B family. The 20S proteasome core is composed of 14 alpha and 14 beta subunits that assemble into four stacked heptameric rings, resulting in a barrel-shaped structure. The two inner rings, each composed of seven catalytic beta subunits, are sandwiched by two outer rings, each composed of seven alpha subunits. The catalytic chamber with the active sites is on the inside of the barrel. Has probably a gated structure, the ends of the cylinder being occluded by the N-termini of the alpha-subunits. Is likely capped at one or both ends by the proteasome regulatory ATPase, PAN.

The protein resides in the cytoplasm. The catalysed reaction is Cleavage of peptide bonds with very broad specificity.. With respect to regulation, the formation of the proteasomal ATPase PAN-20S proteasome complex, via the docking of the C-termini of PAN into the intersubunit pockets in the alpha-rings, triggers opening of the gate for substrate entry. Interconversion between the open-gate and close-gate conformations leads to a dynamic regulation of the 20S proteasome proteolysis activity. Its function is as follows. Component of the proteasome core, a large protease complex with broad specificity involved in protein degradation. This is Proteasome subunit beta from Archaeoglobus fulgidus (strain ATCC 49558 / DSM 4304 / JCM 9628 / NBRC 100126 / VC-16).